Here is a 303-residue protein sequence, read N- to C-terminus: CDAN1-interacting nuclease 1 (303 aa).

The protein localises to the nucleus. Its subcellular location is the cytoplasm. Functionally, may play a role in erythroid cell differentiation. The protein is CDAN1-interacting nuclease 1 of Xenopus laevis (African clawed frog).